Reading from the N-terminus, the 361-residue chain is Phospho-N-acetylmuramoyl-pentapeptide-transferase (361 aa).

10 helical membrane-spanning segments follow: residues 27 to 47, 72 to 92, 99 to 119, 135 to 155, 169 to 189, 200 to 220, 240 to 260, 264 to 284, 289 to 309, and 338 to 358; these read GALF…ISLL, TPTM…LLWA, VWVT…DDYL, LALE…YSPA, ALLN…VGAG, GLAI…AYLV, LAVV…FNAP, IFMG…IAVA, IVLA…IIQV, and QVVI…LATL.

Belongs to the glycosyltransferase 4 family. MraY subfamily. The cofactor is Mg(2+).

It localises to the cell inner membrane. It catalyses the reaction UDP-N-acetyl-alpha-D-muramoyl-L-alanyl-gamma-D-glutamyl-meso-2,6-diaminopimeloyl-D-alanyl-D-alanine + di-trans,octa-cis-undecaprenyl phosphate = di-trans,octa-cis-undecaprenyl diphospho-N-acetyl-alpha-D-muramoyl-L-alanyl-D-glutamyl-meso-2,6-diaminopimeloyl-D-alanyl-D-alanine + UMP. It functions in the pathway cell wall biogenesis; peptidoglycan biosynthesis. Functionally, catalyzes the initial step of the lipid cycle reactions in the biosynthesis of the cell wall peptidoglycan: transfers peptidoglycan precursor phospho-MurNAc-pentapeptide from UDP-MurNAc-pentapeptide onto the lipid carrier undecaprenyl phosphate, yielding undecaprenyl-pyrophosphoryl-MurNAc-pentapeptide, known as lipid I. This Methylobacterium radiotolerans (strain ATCC 27329 / DSM 1819 / JCM 2831 / NBRC 15690 / NCIMB 10815 / 0-1) protein is Phospho-N-acetylmuramoyl-pentapeptide-transferase.